The primary structure comprises 148 residues: Basic leucine zipper 4 (148 aa).

Residues 48 to 97 enclose the bZIP domain; sequence DDKKRRRTISNRESAKRSRMKKKKRFEELTEEVNRLNIRNQELKNRLANV. The interval 50–70 is disordered; the sequence is KKRRRTISNRESAKRSRMKKK. The segment at 50–72 is basic motif; that stretch reads KKRRRTISNRESAKRSRMKKKKR. Positions 76 to 90 are leucine-zipper; the sequence is LTEEVNRLNIRNQEL.

It localises to the nucleus. In terms of biological role, probable transcription factor involved in somatic embryogenesis. Acts as a positive regulator of BHLH109. This chain is Basic leucine zipper 4, found in Arabidopsis thaliana (Mouse-ear cress).